We begin with the raw amino-acid sequence, 307 residues long: Nucleotide-binding protein Arth_2083 (307 aa).

Position 30–37 (30–37 (GMSGAGRS)) interacts with ATP. 81 to 84 (DVRS) serves as a coordination point for GTP.

The protein belongs to the RapZ-like family.

Functionally, displays ATPase and GTPase activities. In Arthrobacter sp. (strain FB24), this protein is Nucleotide-binding protein Arth_2083.